Consider the following 46-residue polypeptide: Defensin-1 (46 aa).

4 disulfides stabilise this stretch: C3–C46, C14–C35, C20–C40, and C24–C42.

Belongs to the DEFL family. In terms of tissue distribution, epidermis and vascular bundles of pods, stems, roots, leaves and wet or dry seeds.

Its function is as follows. Possesses antifungal activity sensitive to inorganic cations. The sequence is that of Defensin-1 from Pisum sativum (Garden pea).